The chain runs to 302 residues: Sulfate adenylyltransferase subunit 2 (302 aa).

It belongs to the PAPS reductase family. CysD subfamily. In terms of assembly, heterodimer composed of CysD, the smaller subunit, and CysN.

It catalyses the reaction sulfate + ATP + H(+) = adenosine 5'-phosphosulfate + diphosphate. Its pathway is sulfur metabolism; hydrogen sulfide biosynthesis; sulfite from sulfate: step 1/3. Its function is as follows. With CysN forms the ATP sulfurylase (ATPS) that catalyzes the adenylation of sulfate producing adenosine 5'-phosphosulfate (APS) and diphosphate, the first enzymatic step in sulfur assimilation pathway. APS synthesis involves the formation of a high-energy phosphoric-sulfuric acid anhydride bond driven by GTP hydrolysis by CysN coupled to ATP hydrolysis by CysD. In Erwinia tasmaniensis (strain DSM 17950 / CFBP 7177 / CIP 109463 / NCPPB 4357 / Et1/99), this protein is Sulfate adenylyltransferase subunit 2.